We begin with the raw amino-acid sequence, 121 residues long: Ribonuclease P protein component (121 aa).

The protein belongs to the RnpA family. In terms of assembly, consists of a catalytic RNA component (M1 or rnpB) and a protein subunit.

It carries out the reaction Endonucleolytic cleavage of RNA, removing 5'-extranucleotides from tRNA precursor.. RNaseP catalyzes the removal of the 5'-leader sequence from pre-tRNA to produce the mature 5'-terminus. It can also cleave other RNA substrates such as 4.5S RNA. The protein component plays an auxiliary but essential role in vivo by binding to the 5'-leader sequence and broadening the substrate specificity of the ribozyme. The sequence is that of Ribonuclease P protein component from Erythrobacter litoralis (strain HTCC2594).